We begin with the raw amino-acid sequence, 284 residues long: Bifunctional protein FolD (284 aa).

NADP(+)-binding positions include 166–168 and I232; that span reads GAS.

It belongs to the tetrahydrofolate dehydrogenase/cyclohydrolase family. In terms of assembly, homodimer.

The enzyme catalyses (6R)-5,10-methylene-5,6,7,8-tetrahydrofolate + NADP(+) = (6R)-5,10-methenyltetrahydrofolate + NADPH. It carries out the reaction (6R)-5,10-methenyltetrahydrofolate + H2O = (6R)-10-formyltetrahydrofolate + H(+). It functions in the pathway one-carbon metabolism; tetrahydrofolate interconversion. Functionally, catalyzes the oxidation of 5,10-methylenetetrahydrofolate to 5,10-methenyltetrahydrofolate and then the hydrolysis of 5,10-methenyltetrahydrofolate to 10-formyltetrahydrofolate. This chain is Bifunctional protein FolD, found in Tolumonas auensis (strain DSM 9187 / NBRC 110442 / TA 4).